A 239-amino-acid polypeptide reads, in one-letter code: 1-(5-phosphoribosyl)-5-[(5-phosphoribosylamino)methylideneamino] imidazole-4-carboxamide isomerase (239 aa).

The active-site Proton acceptor is Asp-8. Asp-129 acts as the Proton donor in catalysis.

It belongs to the HisA/HisF family.

Its subcellular location is the cytoplasm. The catalysed reaction is 1-(5-phospho-beta-D-ribosyl)-5-[(5-phospho-beta-D-ribosylamino)methylideneamino]imidazole-4-carboxamide = 5-[(5-phospho-1-deoxy-D-ribulos-1-ylimino)methylamino]-1-(5-phospho-beta-D-ribosyl)imidazole-4-carboxamide. The protein operates within amino-acid biosynthesis; L-histidine biosynthesis; L-histidine from 5-phospho-alpha-D-ribose 1-diphosphate: step 4/9. The sequence is that of 1-(5-phosphoribosyl)-5-[(5-phosphoribosylamino)methylideneamino] imidazole-4-carboxamide isomerase from Bacillus cereus (strain ZK / E33L).